Here is a 153-residue protein sequence, read N- to C-terminus: Arginine regulator (153 aa).

This sequence belongs to the ArgR family.

The protein resides in the cytoplasm. It participates in amino-acid degradation; L-arginine degradation via ADI pathway. Regulates the transcription of the arc operon, involved in arginine catabolism. This chain is Arginine regulator (argR1), found in Lactiplantibacillus plantarum (strain ATCC BAA-793 / NCIMB 8826 / WCFS1) (Lactobacillus plantarum).